A 201-amino-acid polypeptide reads, in one-letter code: Putative pseudouridine methyltransferase (201 aa).

Positions 132 and 186 each coordinate S-adenosyl-L-methionine.

Belongs to the methyltransferase superfamily. TrmY family.

It localises to the cytoplasm. This chain is Putative pseudouridine methyltransferase, found in Vibrio cholerae serotype O1 (strain ATCC 39315 / El Tor Inaba N16961).